Consider the following 241-residue polypeptide: Carboxy-S-adenosyl-L-methionine synthase (241 aa).

Residues Tyr38, 63 to 65, 88 to 89, 116 to 117, Asn131, and Arg198 contribute to the S-adenosyl-L-methionine site; these read GCS, DN, and DI.

Belongs to the class I-like SAM-binding methyltransferase superfamily. Cx-SAM synthase family. In terms of assembly, homodimer.

It catalyses the reaction prephenate + S-adenosyl-L-methionine = carboxy-S-adenosyl-L-methionine + 3-phenylpyruvate + H2O. Functionally, catalyzes the conversion of S-adenosyl-L-methionine (SAM) to carboxy-S-adenosyl-L-methionine (Cx-SAM). The sequence is that of Carboxy-S-adenosyl-L-methionine synthase from Pasteurella multocida (strain Pm70).